The chain runs to 278 residues: Urease accessory protein UreD (278 aa).

It belongs to the UreD family. In terms of assembly, ureD, UreF and UreG form a complex that acts as a GTP-hydrolysis-dependent molecular chaperone, activating the urease apoprotein by helping to assemble the nickel containing metallocenter of UreC. The UreE protein probably delivers the nickel.

The protein localises to the cytoplasm. Required for maturation of urease via the functional incorporation of the urease nickel metallocenter. This chain is Urease accessory protein UreD, found in Deinococcus radiodurans (strain ATCC 13939 / DSM 20539 / JCM 16871 / CCUG 27074 / LMG 4051 / NBRC 15346 / NCIMB 9279 / VKM B-1422 / R1).